The chain runs to 177 residues: Large ribosomal subunit protein uL6 (177 aa).

The protein belongs to the universal ribosomal protein uL6 family. Part of the 50S ribosomal subunit.

In terms of biological role, this protein binds to the 23S rRNA, and is important in its secondary structure. It is located near the subunit interface in the base of the L7/L12 stalk, and near the tRNA binding site of the peptidyltransferase center. In Pseudomonas fluorescens (strain ATCC BAA-477 / NRRL B-23932 / Pf-5), this protein is Large ribosomal subunit protein uL6.